The sequence spans 512 residues: Methionine--tRNA ligase (512 aa).

The 'HIGH' region motif lies at Tyr-12–His-22. A 'KMSKS' region motif is present at residues Lys-295–Ser-299. Lys-298 contributes to the ATP binding site.

Belongs to the class-I aminoacyl-tRNA synthetase family. MetG type 2B subfamily. As to quaternary structure, monomer.

It is found in the cytoplasm. The enzyme catalyses tRNA(Met) + L-methionine + ATP = L-methionyl-tRNA(Met) + AMP + diphosphate. In terms of biological role, is required not only for elongation of protein synthesis but also for the initiation of all mRNA translation through initiator tRNA(fMet) aminoacylation. The sequence is that of Methionine--tRNA ligase from Rickettsia felis (strain ATCC VR-1525 / URRWXCal2) (Rickettsia azadi).